Consider the following 349-residue polypeptide: Protein RecA (349 aa).

Phosphate is bound at residue 71–75 (SSGKT). ATP is bound by residues 71–76 (SSGKTT) and 102–105 (DPEY). Gln-196 contributes to the phosphate binding site.

Belongs to the RecA family. Polymerizes non-specifically on ssDNA to form filaments. Interacts with and activates LexA leading to autocatalytic cleavage of LexA, which derepresses the SOS regulon and activates DNA repair.

It is found in the cytoplasm. Functionally, required for homologous recombination (HR) and the bypass of mutagenic DNA lesions (double strand breaks, DSB) by the SOS response. Can catalyze the hydrolysis of ATP in the presence of single-stranded DNA, the ATP-dependent uptake of single-stranded DNA by duplex DNA, and the ATP-dependent hybridization of homologous single-stranded DNAs. Numerous X-ray crystals have been resolved under different conditions which indicate the flexibility of the protein, essential to its function. Gln-196 contributes to this plasticity by acting as a switch residue, which transmits the effect of nucleotide binding to the DNA-binding region. The protein is Protein RecA of Mycolicibacterium smegmatis (strain ATCC 700084 / mc(2)155) (Mycobacterium smegmatis).